A 267-amino-acid chain; its full sequence is 3-oxoadipate enol-lactonase 2 (267 aa).

The enzyme catalyses (4,5-dihydro-5-oxofuran-2-yl)-acetate + H2O = 3-oxoadipate + H(+). It functions in the pathway aromatic compound metabolism; beta-ketoadipate pathway; 3-oxoadipate from 5-oxo-4,5-dihydro-2-furylacetate: step 1/1. The protein is 3-oxoadipate enol-lactonase 2 (catD) of Acinetobacter baylyi (strain ATCC 33305 / BD413 / ADP1).